A 204-amino-acid chain; its full sequence is Protein FAM167A (204 aa).

The segment at 58–80 (GLAVSDGSTELEKDAGLKPRATP) is disordered. A coiled-coil region spans residues 113–146 (LRKELMEMRIQDQQLARQLMRLRGDINKLKVEQT).

Belongs to the FAM167 (SEC) family.

This Danio rerio (Zebrafish) protein is Protein FAM167A (fam167a).